Reading from the N-terminus, the 101-residue chain is Small ribosomal subunit protein uS14 (101 aa).

Belongs to the universal ribosomal protein uS14 family. In terms of assembly, part of the 30S ribosomal subunit. Contacts proteins S3 and S10.

Functionally, binds 16S rRNA, required for the assembly of 30S particles and may also be responsible for determining the conformation of the 16S rRNA at the A site. The chain is Small ribosomal subunit protein uS14 from Aliivibrio fischeri (strain ATCC 700601 / ES114) (Vibrio fischeri).